Consider the following 386-residue polypeptide: Methylthioribose-1-phosphate isomerase (386 aa).

The active-site Proton donor is Asp-261.

This sequence belongs to the eIF-2B alpha/beta/delta subunits family. MtnA subfamily.

It localises to the cytoplasm. The protein localises to the nucleus. The catalysed reaction is 5-(methylsulfanyl)-alpha-D-ribose 1-phosphate = 5-(methylsulfanyl)-D-ribulose 1-phosphate. Its pathway is amino-acid biosynthesis; L-methionine biosynthesis via salvage pathway; L-methionine from S-methyl-5-thio-alpha-D-ribose 1-phosphate: step 1/6. Functionally, catalyzes the interconversion of methylthioribose-1-phosphate (MTR-1-P) into methylthioribulose-1-phosphate (MTRu-1-P). This Paracoccidioides brasiliensis (strain Pb03) protein is Methylthioribose-1-phosphate isomerase.